We begin with the raw amino-acid sequence, 339 residues long: Phenylalanine--tRNA ligase alpha subunit (339 aa).

Mg(2+) is bound at residue Glu254.

Belongs to the class-II aminoacyl-tRNA synthetase family. Phe-tRNA synthetase alpha subunit type 1 subfamily. Tetramer of two alpha and two beta subunits. The cofactor is Mg(2+).

It localises to the cytoplasm. The enzyme catalyses tRNA(Phe) + L-phenylalanine + ATP = L-phenylalanyl-tRNA(Phe) + AMP + diphosphate + H(+). The chain is Phenylalanine--tRNA ligase alpha subunit from Clostridium perfringens (strain ATCC 13124 / DSM 756 / JCM 1290 / NCIMB 6125 / NCTC 8237 / Type A).